Reading from the N-terminus, the 336-residue chain is tRNA N6-adenosine threonylcarbamoyltransferase (336 aa).

Residues histidine 112 and histidine 116 each contribute to the Fe cation site. Substrate contacts are provided by residues 136–140 (LVSGG), aspartate 169, glycine 182, and asparagine 276. Position 304 (aspartate 304) interacts with Fe cation.

This sequence belongs to the KAE1 / TsaD family. The cofactor is Fe(2+).

The protein resides in the cytoplasm. It catalyses the reaction L-threonylcarbamoyladenylate + adenosine(37) in tRNA = N(6)-L-threonylcarbamoyladenosine(37) in tRNA + AMP + H(+). In terms of biological role, required for the formation of a threonylcarbamoyl group on adenosine at position 37 (t(6)A37) in tRNAs that read codons beginning with adenine. Is involved in the transfer of the threonylcarbamoyl moiety of threonylcarbamoyl-AMP (TC-AMP) to the N6 group of A37, together with TsaE and TsaB. TsaD likely plays a direct catalytic role in this reaction. The polypeptide is tRNA N6-adenosine threonylcarbamoyltransferase (Francisella tularensis subsp. holarctica (strain LVS)).